Reading from the N-terminus, the 508-residue chain is Fasciclin-3 (508 aa).

The signal sequence occupies residues 1 to 20 (MSRIVFICLAAILTDALTWA). The residue at position 21 (Q21) is a Pyrrolidone carboxylic acid. Residues 21 to 346 (QVNVEPNTAL…SSKPPSSSLD (326 aa)) lie on the Extracellular side of the membrane. The region spanning 44-106 (GRSINYCRIE…NGQVKCSLGV (63 aa)) is the Ig-like V-type domain. Ig-like C2-type domains lie at 126–223 (PIIE…ESVP) and 236–310 (APVH…GLTL). A disulfide bridge connects residues C150 and C211. Residues N160, N257, and N300 are each glycosylated (N-linked (GlcNAc...) asparagine). The helical transmembrane segment at 347 to 370 (VAAIVGIVVAVAVLVLVVLLIVFA) threads the bilayer. Residues 371 to 508 (RATGRWCFGG…QSTSPVWTFK (138 aa)) lie on the Cytoplasmic side of the membrane. The tract at residues 381 to 439 (KSIKTPTNETSDTESADIKATSTATATTTMGGVGVSAEEEETVNEQESPQEQQQQQQKK) is disordered. S382 is subject to Phosphoserine. Composition is skewed to low complexity over residues 400–409 (ATSTATATTT) and 425–437 (EQESPQEQQQQQQ). Phosphoserine is present on S459.

Expressed on different subsets of axon bundles (fascicles) in insect embryos.

Its subcellular location is the membrane. Functionally, mediates cell adhesion in a Ca(2+)-independent manner. It plays a role in axon outgrowth, guidance and fasciculation of the developing nervous system. Function in neurons is essential for adult survival, and is important for climbing behavior and activity. In Drosophila melanogaster (Fruit fly), this protein is Fasciclin-3 (Fas3).